Here is a 78-residue protein sequence, read N- to C-terminus: ATP synthase subunit c (78 aa).

2 consecutive transmembrane segments (helical) span residues 16–36 (LATL…ASFL) and 57–77 (MALA…ILFV).

The protein belongs to the ATPase C chain family. F-type ATPases have 2 components, F(1) - the catalytic core - and F(0) - the membrane proton channel. F(1) has five subunits: alpha(3), beta(3), gamma(1), delta(1), epsilon(1). F(0) has three main subunits: a(1), b(2) and c(10-14). The alpha and beta chains form an alternating ring which encloses part of the gamma chain. F(1) is attached to F(0) by a central stalk formed by the gamma and epsilon chains, while a peripheral stalk is formed by the delta and b chains.

The protein localises to the cell inner membrane. F(1)F(0) ATP synthase produces ATP from ADP in the presence of a proton or sodium gradient. F-type ATPases consist of two structural domains, F(1) containing the extramembraneous catalytic core and F(0) containing the membrane proton channel, linked together by a central stalk and a peripheral stalk. During catalysis, ATP synthesis in the catalytic domain of F(1) is coupled via a rotary mechanism of the central stalk subunits to proton translocation. Its function is as follows. Key component of the F(0) channel; it plays a direct role in translocation across the membrane. A homomeric c-ring of between 10-14 subunits forms the central stalk rotor element with the F(1) delta and epsilon subunits. The protein is ATP synthase subunit c of Hyphomonas neptunium (strain ATCC 15444).